A 1691-amino-acid chain; its full sequence is MLINKLWLLLVTLCLTEELAAAGEKSYGKPCGGQDCSGSCQCFPEKGARGRPGPIGIQGPTGPQGFTGSTGLSGLKGERGFPGLLGPYGPKGDKGPMGVPGFLGINGIPGHPGQPGPRGPPGLDGCNGTQGAVGFPGPDGYPGLLGPPGLPGQKGSKGDPVLAPGSFKGMKGDPGLPGLDGITGPQGAPGFPGAVGPAGPPGLQGPPGPPGPLGPDGNMGLGFQGEKGVKGDVGLPGPAGPPPSTGELEFMGFPKGKKGSKGEPGPKGFPGISGPPGFPGLGTTGEKGEKGEKGIPGLPGPRGPMGSEGVQGPPGQQGKKGTLGFPGLNGFQGIEGQKGDIGLPGPDVFIDIDGAVISGNPGDPGVPGLPGLKGDEGIQGLRGPSGVPGLPALSGVPGALGPQGFPGLKGDQGNPGRTTIGAAGLPGRDGLPGPPGPPGPPSPEFETETLHNKESGFPGLRGEQGPKGNLGLKGIKGDSGFCACDGGVPNTGPPGEPGPPGPWGLIGLPGLKGARGDRGSGGAQGPAGAPGLVGPLGPSGPKGKKGEPILSTIQGMPGDRGDSGSQGFRGVIGEPGKDGVPGLPGLPGLPGDGGQGFPGEKGLPGLPGEKGHPGPPGLPGNGLPGLPGPRGLPGDKGKDGLPGQQGLPGSKGITLPCIIPGSYGPSGFPGTPGFPGPKGSRGLPGTPGQPGSSGSKGEPGSPGLVHLPELPGFPGPRGEKGLPGFPGLPGKDGLPGMIGSPGLPGSKGATGDIFGAENGAPGEQGLQGLTGHKGFLGDSGLPGLKGVHGKPGLLGPKGERGSPGTPGQVGQPGTPGSSGPYGIKGKSGLPGAPGFPGISGHPGKKGTRGKKGPPGSIVKKGLPGLKGLPGNPGLVGLKGSPGSPGVAGLPALSGPKGEKGSVGFVGFPGIPGLPGIPGTRGLKGIPGSTGKMGPSGRAGTPGEKGDRGNPGPVGIPSPRRPMSNLWLKGDKGSQGSAGSNGFPGPRGDKGEAGRPGPPGLPGAPGLPGIIKGVSGKPGPPGFMGIRGLPGLKGSSGITGFPGMPGESGSQGIRGSPGLPGASGLPGLKGDNGQTVEISGSPGPKGQPGESGFKGTKGRDGLIGNIGFPGNKGEDGKVGVSGDVGLPGAPGFPGVAGMRGEPGLPGSSGHQGAIGPLGSPGLIGPKGFPGFPGLHGLNGLPGTKGTHGTPGPSITGVPGPAGLPGPKGEKGYPGIGIGAPGKPGLRGQKGDRGFPGLQGPAGLPGAPGISLPSLIAGQPGDPGRPGLDGERGRPGPAGPPGPPGPSSNQGDTGDPGFPGIPGPKGPKGDQGIPGFSGLPGELGLKGMRGEPGFMGTPGKVGPPGDPGFPGMKGKAGPRGSSGLQGDPGQTPTAEAVQVPPGPLGLPGIDGIPGLTGDPGAQGPVGLQGSKGLPGIPGKDGPSGLPGPPGALGDPGLPGLQGPPGFEGAPGQQGPFGMPGMPGQSMRVGYTLVKHSQSEQVPPCPIGMSQLWVGYSLLFVEGQEKAHNQDLGFAGSCLPRFSTMPFIYCNINEVCHYARRNDKSYWLSTTAPIPMMPVSQTQIPQYISRCSVCEAPSQAIAVHSQDITIPQCPLGWRSLWIGYSFLMHTAAGAEGGGQSLVSPGSCLEDFRATPFIECSGARGTCHYFANKYSFWLTTVEERQQFGELPVSETLKAGQLHTRVSRCQVCMKSL.

The first 22 residues, 1-22, serve as a signal peptide directing secretion; sequence MLINKLWLLLVTLCLTEELAAA. The segment at 23-46 is 7S domain; the sequence is GEKSYGKPCGGQDCSGSCQCFPEK. The interval 47-1463 is triple-helical region; sequence GARGRPGPIG…FGMPGMPGQS (1417 aa). Disordered regions lie at residues 108–338, 404–473, 486–881, 915–1099, and 1185–1459; these read IPGH…EGQK, GFPG…LGLK, GGVP…KGSP, GIPG…KGRD, and THGT…MPGM. Asparagine 127 is a glycosylation site (N-linked (GlcNAc...) asparagine). Residues 185 to 197 are compositionally biased toward low complexity; it reads PQGAPGFPGAVGP. A compositionally biased stretch (pro residues) spans 198 to 213; sequence AGPPGLQGPPGPPGPL. Low complexity-rich tracts occupy residues 311-320 and 421-431; these read QGPPGQQGKK and GAAGLPGRDGL. 2 stretches are compositionally biased toward pro residues: residues 432 to 443 and 491 to 502; these read PGPPGPPGPPSP and TGPPGEPGPPGP. Over residues 503-512 the composition is skewed to low complexity; sequence WGLIGLPGLK. Residues 515–517 carry the Cell attachment site motif; sequence RGD. Positions 526–541 are enriched in low complexity; sequence PAGAPGLVGPLGPSGP. The short motif at 560–562 is the Cell attachment site element; that stretch reads RGD. The span at 588–599 shows a compositional bias: gly residues; the sequence is GLPGDGGQGFPG. Low complexity-rich tracts occupy residues 641-652, 660-703, 722-735, and 802-820; these read LPGQQGLPGSKG, PGSY…GSPG, LPGFPGLPGKDGLP, and SPGTPGQVGQPGTPGSSGP. Residues 842-851 show a composition bias toward basic residues; sequence PGKKGTRGKK. The segment covering 853–878 has biased composition (low complexity); sequence PPGSIVKKGLPGLKGLPGNPGLVGLK. A Cell attachment site motif is present at residues 986-988; it reads RGD. Low complexity predominate over residues 1055–1068; sequence SPGLPGASGLPGLK. Gly residues predominate over residues 1210–1220; that stretch reads GYPGIGIGAPG. A compositionally biased stretch (low complexity) spans 1234 to 1253; that stretch reads PGLQGPAGLPGAPGISLPSL. The span at 1275–1284 shows a compositional bias: pro residues; it reads PAGPPGPPGP. Residues 1360–1371 show a composition bias toward polar residues; the sequence is SGLQGDPGQTPT. Composition is skewed to low complexity over residues 1384-1397 and 1429-1459; these read LPGIDGIPGLTGDP and ALGDPGLPGLQGPPGFEGAPGQQGPFGMPGM. A Collagen IV NC1 domain is found at 1467–1691; the sequence is GYTLVKHSQS…SRCQVCMKSL (225 aa). 6 cysteine pairs are disulfide-bonded: cysteine 1482-cysteine 1571, cysteine 1515-cysteine 1568, cysteine 1527-cysteine 1533, cysteine 1590-cysteine 1687, cysteine 1624-cysteine 1684, and cysteine 1636-cysteine 1643.

Belongs to the type IV collagen family. There are six type IV collagen isoforms, alpha 1(IV)-alpha 6(IV), each of which can form a triple helix structure with 2 other chains to generate type IV collagen network. Prolines at the third position of the tripeptide repeating unit (G-X-Y) are hydroxylated in some or all of the chains. In terms of processing, type IV collagens contain numerous cysteine residues which are involved in inter- and intramolecular disulfide bonding. 12 of these, located in the NC1 domain, are conserved in all known type IV collagens. Post-translationally, the trimeric structure of the NC1 domains is stabilized by covalent bonds between Lys and Met residues.

The protein resides in the secreted. Its subcellular location is the extracellular space. The protein localises to the extracellular matrix. It localises to the basement membrane. Its function is as follows. Type IV collagen is the major structural component of glomerular basement membranes (GBM), forming a 'chicken-wire' meshwork together with laminins, proteoglycans and entactin/nidogen. This is Collagen alpha-6(IV) chain (COL4A6) from Homo sapiens (Human).